We begin with the raw amino-acid sequence, 429 residues long: Glutamate-1-semialdehyde 2,1-aminomutase 2 (429 aa).

Lysine 268 is modified (N6-(pyridoxal phosphate)lysine).

Belongs to the class-III pyridoxal-phosphate-dependent aminotransferase family. HemL subfamily. As to quaternary structure, homodimer. Pyridoxal 5'-phosphate serves as cofactor.

Its subcellular location is the cytoplasm. It carries out the reaction (S)-4-amino-5-oxopentanoate = 5-aminolevulinate. The protein operates within porphyrin-containing compound metabolism; protoporphyrin-IX biosynthesis; 5-aminolevulinate from L-glutamyl-tRNA(Glu): step 2/2. The sequence is that of Glutamate-1-semialdehyde 2,1-aminomutase 2 from Bacillus cereus (strain ATCC 10987 / NRS 248).